Reading from the N-terminus, the 191-residue chain is NAD(P)H-quinone oxidoreductase subunit L, chloroplastic (191 aa).

Residues 1-46 (MSRCGSLGLYAPNALPSLSLKPRSVKSPFCITSHTKPNDTLLHNVN) constitute a chloroplast transit peptide. The next 3 membrane-spanning stretches (helical) occupy residues 61–81 (TILA…ALAI), 93–113 (VVLD…PIIM), and 129–149 (YLQF…APFL).

It belongs to the NDH complex subunit L family. As to quaternary structure, part of the chloroplast NDH complex, composed of a mixture of chloroplast and nucleus encoded subunits. Component of the NDH subcomplex A, at least composed of ndhH, ndhI, ndhJ, ndhK, ndhL, ndhM, ndhN and ndhO.

It localises to the plastid. The protein localises to the chloroplast thylakoid membrane. The enzyme catalyses a plastoquinone + NADH + (n+1) H(+)(in) = a plastoquinol + NAD(+) + n H(+)(out). It carries out the reaction a plastoquinone + NADPH + (n+1) H(+)(in) = a plastoquinol + NADP(+) + n H(+)(out). Its function is as follows. NDH shuttles electrons from NAD(P)H:plastoquinone, via FMN and iron-sulfur (Fe-S) centers, to quinones in the photosynthetic chain and possibly in a chloroplast respiratory chain. The immediate electron acceptor for the enzyme in this species is believed to be plastoquinone. Couples the redox reaction to proton translocation, and thus conserves the redox energy in a proton gradient. The sequence is that of NAD(P)H-quinone oxidoreductase subunit L, chloroplastic from Arabidopsis thaliana (Mouse-ear cress).